Consider the following 161-residue polypeptide: Cytochrome c-type biogenesis protein CcmE (161 aa).

The Cytoplasmic segment spans residues 1 to 8 (MNARRKKR). Residues 9 to 29 (LALATALIGGVAAIASLLLYA) form a helical; Signal-anchor for type II membrane protein membrane-spanning segment. The Periplasmic portion of the chain corresponds to 30 to 161 (LNSNLNLFYT…DYNAEQKSGY (132 aa)). Positions 131 and 135 each coordinate heme.

Belongs to the CcmE/CycJ family.

The protein localises to the cell inner membrane. In terms of biological role, heme chaperone required for the biogenesis of c-type cytochromes. Transiently binds heme delivered by CcmC and transfers the heme to apo-cytochromes in a process facilitated by CcmF and CcmH. The polypeptide is Cytochrome c-type biogenesis protein CcmE (Shewanella woodyi (strain ATCC 51908 / MS32)).